Reading from the N-terminus, the 268-residue chain is Tryptophan synthase alpha chain (268 aa).

Catalysis depends on proton acceptor residues glutamate 49 and aspartate 60.

It belongs to the TrpA family. In terms of assembly, tetramer of two alpha and two beta chains.

The enzyme catalyses (1S,2R)-1-C-(indol-3-yl)glycerol 3-phosphate + L-serine = D-glyceraldehyde 3-phosphate + L-tryptophan + H2O. It functions in the pathway amino-acid biosynthesis; L-tryptophan biosynthesis; L-tryptophan from chorismate: step 5/5. In terms of biological role, the alpha subunit is responsible for the aldol cleavage of indoleglycerol phosphate to indole and glyceraldehyde 3-phosphate. The protein is Tryptophan synthase alpha chain of Pseudomonas aeruginosa (strain LESB58).